The primary structure comprises 143 residues: Large ribosomal subunit protein uL15 (143 aa).

A disordered region spans residues 1–59; the sequence is MELNGIKPSLGAKHAKRRVGRGIGSGLGKTAGRGHKGQKSRAGGYHKVGFEGGQMPMQR. Residues 21–31 are compositionally biased toward gly residues; sequence RGIGSGLGKTA.

The protein belongs to the universal ribosomal protein uL15 family. Part of the 50S ribosomal subunit.

In terms of biological role, binds to the 23S rRNA. This is Large ribosomal subunit protein uL15 from Polaromonas sp. (strain JS666 / ATCC BAA-500).